A 71-amino-acid chain; its full sequence is Translational regulator CsrA (71 aa).

Residues 50–71 (RIRHEKDGDVPEAAPGQGADPQ) form a disordered region.

Belongs to the CsrA/RsmA family. Homodimer; the beta-strands of each monomer intercalate to form a hydrophobic core, while the alpha-helices form wings that extend away from the core.

The protein localises to the cytoplasm. Its function is as follows. A key translational regulator that binds mRNA to regulate translation initiation and/or mRNA stability. Mediates global changes in gene expression, shifting from rapid growth to stress survival by linking envelope stress, the stringent response and the catabolite repression systems. Usually binds in the 5'-UTR; binding at or near the Shine-Dalgarno sequence prevents ribosome-binding, repressing translation, binding elsewhere in the 5'-UTR can activate translation and/or stabilize the mRNA. Its function is antagonized by small RNA(s). This is Translational regulator CsrA from Halorhodospira halophila (strain DSM 244 / SL1) (Ectothiorhodospira halophila (strain DSM 244 / SL1)).